A 62-amino-acid polypeptide reads, in one-letter code: Conotoxin Lt5.8 (62 aa).

The N-terminal stretch at Met-1–Thr-19 is a signal peptide. A propeptide spanning residues Met-20–Ser-47 is cleaved from the precursor. Gln-50 bears the Pyrrolidone carboxylic acid mark. Gln-61 is modified (glutamine amide).

It belongs to the conotoxin T superfamily. Post-translationally, contains 2 disulfide bonds that can be either 'C1-C3, C2-C4' or 'C1-C4, C2-C3', since these disulfide connectivities have been observed for conotoxins with cysteine framework V (for examples, see AC P0DQQ7 and AC P81755). As to expression, expressed by the venom duct.

The protein localises to the secreted. The protein is Conotoxin Lt5.8 of Conus litteratus (Lettered cone).